Consider the following 212-residue polypeptide: Large ribosomal subunit protein uL1 (212 aa).

It belongs to the universal ribosomal protein uL1 family. In terms of assembly, part of the 50S ribosomal subunit.

Functionally, binds directly to 23S rRNA. Probably involved in E site tRNA release. Its function is as follows. Protein L1 is also a translational repressor protein, it controls the translation of its operon by binding to its mRNA. This chain is Large ribosomal subunit protein uL1, found in Haloquadratum walsbyi (strain DSM 16790 / HBSQ001).